The sequence spans 85 residues: Omega-conotoxin-like Am6.5 (85 aa).

Positions 1 to 19 (MCILIVAVLFLTAWTFVMA) are cleaved as a signal peptide. The propeptide occupies 20–53 (DDPRDEPDTVVRGGKLFSRARDEMNPAASKLNER). 3 disulfide bridges follow: cysteine 55-cysteine 73, cysteine 62-cysteine 77, and cysteine 72-cysteine 81. Glutamine 84 carries the post-translational modification Glutamine amide.

It belongs to the conotoxin O1 family. In terms of processing, is not hydroxylated. In terms of tissue distribution, expressed by the venom duct.

Its subcellular location is the secreted. In terms of biological role, omega-conotoxins act at presynaptic membranes, they bind and block voltage-gated calcium channels (Cav). This chain is Omega-conotoxin-like Am6.5, found in Conus amadis (Amadis cone).